The sequence spans 199 residues: Adenylyl-sulfate kinase (199 aa).

Position 31 to 38 (31 to 38) interacts with ATP; sequence GLSGSGKS. S105 (phosphoserine intermediate) is an active-site residue.

Belongs to the APS kinase family.

It carries out the reaction adenosine 5'-phosphosulfate + ATP = 3'-phosphoadenylyl sulfate + ADP + H(+). It participates in sulfur metabolism; hydrogen sulfide biosynthesis; sulfite from sulfate: step 2/3. Functionally, catalyzes the synthesis of activated sulfate. This is Adenylyl-sulfate kinase from Marinobacter nauticus (strain ATCC 700491 / DSM 11845 / VT8) (Marinobacter aquaeolei).